The primary structure comprises 914 residues: TRPM8 channel-associated factor 3 (914 aa).

The region spanning 533–832 (NSWVSTGLYL…TYLQLQEGFG (300 aa)) is the Peptidase M60 domain.

It belongs to the TCAF family.

Its function is as follows. May play a role in the regulation of the cation channel TRPM8 activity. This chain is TRPM8 channel-associated factor 3, found in Rattus norvegicus (Rat).